The sequence spans 156 residues: Putative HTH-type transcriptional regulator BadM (156 aa).

In terms of domain architecture, HTH rrf2-type spans arginine 4–lysine 130. The disordered stretch occupies residues arginine 136–alanine 156. Over residues glycine 145–alanine 156 the composition is skewed to low complexity.

The polypeptide is Putative HTH-type transcriptional regulator BadM (badM) (Rhodopseudomonas palustris (strain ATCC BAA-98 / CGA009)).